We begin with the raw amino-acid sequence, 315 residues long: Acetyl-coenzyme A carboxylase carboxyl transferase subunit alpha (315 aa).

In terms of domain architecture, CoA carboxyltransferase C-terminal spans 40-293 (LQDKSKTLTE…REELSSQLAM (254 aa)).

This sequence belongs to the AccA family. Acetyl-CoA carboxylase is a heterohexamer composed of biotin carboxyl carrier protein (AccB), biotin carboxylase (AccC) and two subunits each of ACCase subunit alpha (AccA) and ACCase subunit beta (AccD).

It localises to the cytoplasm. It catalyses the reaction N(6)-carboxybiotinyl-L-lysyl-[protein] + acetyl-CoA = N(6)-biotinyl-L-lysyl-[protein] + malonyl-CoA. Its pathway is lipid metabolism; malonyl-CoA biosynthesis; malonyl-CoA from acetyl-CoA: step 1/1. In terms of biological role, component of the acetyl coenzyme A carboxylase (ACC) complex. First, biotin carboxylase catalyzes the carboxylation of biotin on its carrier protein (BCCP) and then the CO(2) group is transferred by the carboxyltransferase to acetyl-CoA to form malonyl-CoA. The chain is Acetyl-coenzyme A carboxylase carboxyl transferase subunit alpha from Pseudomonas syringae pv. tomato (strain ATCC BAA-871 / DC3000).